A 203-amino-acid polypeptide reads, in one-letter code: Glycerol-3-phosphate acyltransferase (203 aa).

4 helical membrane passes run 6 to 26 (LTLL…AVLV), 82 to 102 (AISL…PIFF), 118 to 138 (APIG…LVLI), and 141 to 161 (YSSL…WWLD).

Belongs to the PlsY family. Probably interacts with PlsX.

It is found in the cell inner membrane. The enzyme catalyses an acyl phosphate + sn-glycerol 3-phosphate = a 1-acyl-sn-glycero-3-phosphate + phosphate. The protein operates within lipid metabolism; phospholipid metabolism. Functionally, catalyzes the transfer of an acyl group from acyl-phosphate (acyl-PO(4)) to glycerol-3-phosphate (G3P) to form lysophosphatidic acid (LPA). This enzyme utilizes acyl-phosphate as fatty acyl donor, but not acyl-CoA or acyl-ACP. This Shewanella sp. (strain ANA-3) protein is Glycerol-3-phosphate acyltransferase.